Here is a 276-residue protein sequence, read N- to C-terminus: UPF0328 protein ECU03_0010 (276 aa).

2 disordered regions span residues 1–132 and 156–176; these read MAAP…PIIS and SFCQNTRDSPSLPPQRPNMVH. A compositionally biased stretch (basic and acidic residues) spans 106–126; sequence HTEGCHTHEANPEPNTKHTET.

This sequence belongs to the UPF0328 family.

This is UPF0328 protein ECU03_0010 from Encephalitozoon cuniculi (strain GB-M1) (Microsporidian parasite).